A 714-amino-acid chain; its full sequence is Protein BLISTER (714 aa).

4 disordered regions span residues 1–113 (MASA…VDFS), 219–261 (SSYL…KRSR), 288–325 (VTSS…ASDY), and 519–576 (MVQK…SSNT). Over residues 8-33 (RRQEDVEAGRRKLEQFRKRKAAEKAK) the composition is skewed to basic and acidic residues. Polar residues-rich tracts occupy residues 36 to 50 (SQNT…QSVI) and 58 to 74 (SISN…TSNE). Residues 92–102 (DGSKERSRQDD) show a composition bias toward basic and acidic residues. Polar residues-rich tracts occupy residues 219 to 253 (SSYL…SAKS), 288 to 297 (VTSSGSQLSG), 313 to 322 (NGPSSLTSGA), and 519 to 561 (MVQK…SSNQ). Positions 356 to 525 (NDDFTALEQH…LQTMVQKASS (170 aa)) form a coiled coil. Positions 562-576 (ETDSTTLLESDSSNT) are enriched in low complexity.

In terms of assembly, interacts with CLF. In terms of tissue distribution, expressed in root tips, emerging lateral roots, shoot apical meristem (SAM), vasculature of cotyledons, leaves, sepals and carpels.

The protein resides in the nucleus. Its subcellular location is the cytoplasm. Its function is as follows. Is required for normal leaf, flower and seed development and controls cotyledon and leaf patterning by inhibiting premature differentiation. Regulates the expression of a subset of PcG target genes. Is required for the repression of the floral specific genes PI, SEP2, and SEP3, but also for the activation of FLC. Involved in response to cold. Involved in the regulation of COR15A, COR15B, BAM3 and AMY3 transcripts, and ascorbate levels in response to prolonged chilling temperatures. This Arabidopsis thaliana (Mouse-ear cress) protein is Protein BLISTER.